We begin with the raw amino-acid sequence, 573 residues long: ESX-1 secretion system protein EccA1 (573 aa).

Gly334–Thr341 provides a ligand contact to ATP.

This sequence belongs to the CbxX/CfxQ family. Part of the ESX-1 / type VII secretion system (T7SS), which is composed of cytosolic and membrane components.

It is found in the cytoplasm. Part of the ESX-1 specialized secretion system, which delivers several virulence factors to host cells during infection, including the key virulence factors EsxA (ESAT-6) and EsxB (CFP-10). EccA1 exhibits ATPase activity and may provide energy for the export of ESX-1 substrates. This Mycobacterium tuberculosis (strain CDC 1551 / Oshkosh) protein is ESX-1 secretion system protein EccA1.